The primary structure comprises 206 residues: 2,3-bisphosphoglycerate-dependent phosphoglycerate mutase (206 aa).

Substrate contacts are provided by residues 9–16 (RHGQSEWN), 22–23 (TG), Arg-61, 88–91 (ERDY), Lys-99, 115–116 (RR), and 159–160 (GN). Residue His-10 is the Tele-phosphohistidine intermediate of the active site. The active-site Proton donor/acceptor is Glu-88.

The protein belongs to the phosphoglycerate mutase family. BPG-dependent PGAM subfamily. As to quaternary structure, homodimer.

It carries out the reaction (2R)-2-phosphoglycerate = (2R)-3-phosphoglycerate. Its pathway is carbohydrate degradation; glycolysis; pyruvate from D-glyceraldehyde 3-phosphate: step 3/5. Catalyzes the interconversion of 2-phosphoglycerate and 3-phosphoglycerate. The chain is 2,3-bisphosphoglycerate-dependent phosphoglycerate mutase from Brucella melitensis biotype 2 (strain ATCC 23457).